The sequence spans 176 residues: Cytochrome b (176 aa).

3 helical membrane-spanning segments follow: residues 33–53 (FGSL…FLAM), 77–98 (WLLR…YLHV), and 113–133 (WNVG…GYVL). Heme b contacts are provided by His-83 and His-97.

The protein belongs to the cytochrome b family. The cytochrome bc1 complex contains 11 subunits: 3 respiratory subunits (MT-CYB, CYC1 and UQCRFS1), 2 core proteins (UQCRC1 and UQCRC2) and 6 low-molecular weight proteins (UQCRH/QCR6, UQCRB/QCR7, UQCRQ/QCR8, UQCR10/QCR9, UQCR11/QCR10 and a cleavage product of UQCRFS1). This cytochrome bc1 complex then forms a dimer. Heme b is required as a cofactor.

It localises to the mitochondrion inner membrane. Its function is as follows. Component of the ubiquinol-cytochrome c reductase complex (complex III or cytochrome b-c1 complex) that is part of the mitochondrial respiratory chain. The b-c1 complex mediates electron transfer from ubiquinol to cytochrome c. Contributes to the generation of a proton gradient across the mitochondrial membrane that is then used for ATP synthesis. The sequence is that of Cytochrome b (MT-CYB) from Mormopterus kalinowskii (Kalinowski's mastiff bat).